Here is a 475-residue protein sequence, read N- to C-terminus: Ankyrin repeat, SAM and basic leucine zipper domain-containing protein 1 (475 aa).

Residues 1 to 24 are disordered; that stretch reads MAAGPLRGLAVAGGGESSESEDDG. Phosphoserine is present on residues S17, S18, and S20. ANK repeat units follow at residues 45–74, 78–107, 110–144, 148–177, 181–210, and 214–243; these read ERQE…SVDT, YGWT…NASF, DKQT…DPNV, RLMT…EVNT, NGYT…NKMI, and DGKT…PLEG. In terms of domain architecture, SAM spans 272–334; sequence SYTAFGDLEI…KIMAALKELE (63 aa).

As to quaternary structure, interacts with DDX4, PIWIL1, RANBP9 and TDRD1.

The protein localises to the cytoplasm. Functionally, plays a central role during spermatogenesis by repressing transposable elements and preventing their mobilization, which is essential for the germline integrity. Acts via the piRNA metabolic process, which mediates the repression of transposable elements during meiosis by forming complexes composed of piRNAs and Piwi proteins and governs the methylation and subsequent repression of transposons. Its association with pi-bodies suggests a participation in the primary piRNAs metabolic process. Required prior to the pachytene stage to facilitate the production of multiple types of piRNAs, including those associated with repeats involved in the regulation of retrotransposons. May act by mediating protein-protein interactions during germ cell maturation. The sequence is that of Ankyrin repeat, SAM and basic leucine zipper domain-containing protein 1 (ASZ1) from Ovis aries (Sheep).